We begin with the raw amino-acid sequence, 1409 residues long: DNA-directed RNA polymerase subunit beta' (1409 aa).

4 residues coordinate Zn(2+): Cys-70, Cys-72, Cys-85, and Cys-88. Residues Asp-460, Asp-462, and Asp-464 each contribute to the Mg(2+) site. Zn(2+)-binding residues include Cys-822, Cys-896, Cys-903, and Cys-906.

It belongs to the RNA polymerase beta' chain family. As to quaternary structure, the RNAP catalytic core consists of 2 alpha, 1 beta, 1 beta' and 1 omega subunit. When a sigma factor is associated with the core the holoenzyme is formed, which can initiate transcription. It depends on Mg(2+) as a cofactor. Requires Zn(2+) as cofactor.

It carries out the reaction RNA(n) + a ribonucleoside 5'-triphosphate = RNA(n+1) + diphosphate. Its function is as follows. DNA-dependent RNA polymerase catalyzes the transcription of DNA into RNA using the four ribonucleoside triphosphates as substrates. This Methylobacillus flagellatus (strain ATCC 51484 / DSM 6875 / VKM B-1610 / KT) protein is DNA-directed RNA polymerase subunit beta'.